A 333-amino-acid chain; its full sequence is MRTHGLRLVLLALLPTMALGLLEGLYCGKENCYDVLGVTRESSKSEIGKAYRQLARRYHPDLHRGAEAKAAAETQFKLVATAYEILRDEESRTDYDYMLDNPDAYYAHYYRYYRRRVAPKVDVRVVIVVVLTIVSVIQYYSGWQRYDSAIKYFATVPKYRNQALEIARDEIQEKIQKKGKNRMSKNDQRDELERIIRRVIEEKMDVKGGYAKPTLWDVLWVQLIICPYTILSFIVWHAQWFWRYTVMKQPYGREQKLYLIRRHLGMGQHQFEAQEDKLIEEYLHLKLWKRENFVAWKAEQEEEMKKKLAENPRYKAYRRYMKNHGPGRITFED.

Residues 8–28 (LVLLALLPTMALGLLEGLYCG) traverse the membrane as a helical segment. The 69-residue stretch at 31–99 (NCYDVLGVTR…ESRTDYDYML (69 aa)) folds into the J domain. A helical membrane pass occupies residues 123–143 (VRVVIVVVLTIVSVIQYYSGW). Residues 158 to 208 (KYRNQALEIARDEIQEKIQKKGKNRMSKNDQRDELERIIRRVIEEKMDVKG) are a coiled coil. A helical transmembrane segment spans residues 218 to 238 (VLWVQLIICPYTILSFIVWHA).

The protein belongs to the DNAJC25 family.

Its subcellular location is the membrane. This is DnaJ homolog subfamily C member 25 homolog from Drosophila melanogaster (Fruit fly).